We begin with the raw amino-acid sequence, 431 residues long: MRTVVWQSLSEEQQDAILERPAIAEGANITAAVADVIAKVRTQGDAALLELTEKFDRVKPESIRVPSKEINAASERLSAEMKQALEQAYSNIAKFHKAQKPQPIKVETQPGVMCEQVTRPIQKVGLYIPGGSAPLPSTVLMLGVPAKIAGCRKVVLCSPPPIADEILYVAKLCGIDEVYNVGGGQAVAAMAYGTKSVSKVDKIFGPGNAYVTEAKRQVSNDFRGAAIDMPAGPSEVLVIADETADPDFIAADLLSQAEHGPDSQVVLVTPSPIVADQVTDAVQRQLKALSRADIAQKALASSLIIISESITQAVSISNYYGPEHLIVQTKNPRELLPLLDNAGSIFLGDWSPESAGDYASGTNHVLPTYGYTRTYSSLGLADFSKRMTVQELSAEGLQNLAPTVVTMAEAEGLDAHKRAVTIRVEKLTQNR.

The NAD(+) site is built by Y127, Q185, and N208. Substrate-binding residues include S234, Q256, and H259. Q256 and H259 together coordinate Zn(2+). Active-site proton acceptor residues include E323 and H324. The substrate site is built by H324, D357, E411, and H416. D357 contacts Zn(2+). H416 is a Zn(2+) binding site.

This sequence belongs to the histidinol dehydrogenase family. Requires Zn(2+) as cofactor.

The catalysed reaction is L-histidinol + 2 NAD(+) + H2O = L-histidine + 2 NADH + 3 H(+). It participates in amino-acid biosynthesis; L-histidine biosynthesis; L-histidine from 5-phospho-alpha-D-ribose 1-diphosphate: step 9/9. Functionally, catalyzes the sequential NAD-dependent oxidations of L-histidinol to L-histidinaldehyde and then to L-histidine. In Vibrio parahaemolyticus serotype O3:K6 (strain RIMD 2210633), this protein is Histidinol dehydrogenase.